The following is a 430-amino-acid chain: Aspartate aminotransferase, mitochondrial (430 aa).

A mitochondrion-targeting transit peptide spans 1 to 29; the sequence is MALLHSGRFLSGVAAAFHPGLAAAASARA. At Thr48 the chain carries Phosphothreonine. Lys59 is modified (N6-acetyllysine). Gly65 lines the substrate pocket. Residue Lys73 is modified to N6-acetyllysine; alternate. The residue at position 73 (Lys73) is an N6-succinyllysine; alternate. Residue Lys82 is modified to N6-acetyllysine. Lys90 carries the N6-acetyllysine; alternate modification. At Lys90 the chain carries N6-succinyllysine; alternate. The residue at position 96 (Tyr96) is a 3'-nitrotyrosine; alternate. Residue Tyr96 is modified to Phosphotyrosine; alternate. 2 positions are modified to N6-acetyllysine; alternate: Lys107 and Lys122. An N6-succinyllysine; alternate mark is found at Lys107 and Lys122. Ser143 is modified (phosphoserine). At Lys159 the chain carries N6-acetyllysine; alternate. Residue Lys159 is modified to N6-succinyllysine; alternate. Trp162 is a binding site for substrate. An N6-acetyllysine; alternate modification is found at Lys185. An N6-succinyllysine; alternate modification is found at Lys185. Asn215 lines the substrate pocket. Lys227 is subject to N6-succinyllysine. An N6-acetyllysine modification is found at Lys234. Residues Lys279 and Lys296 each carry the N6-acetyllysine; alternate modification. N6-(pyridoxal phosphate)lysine; alternate is present on Lys279. Lys296 is modified (N6-succinyllysine; alternate). Lys302 carries the N6-acetyllysine modification. Lys309 is modified (N6-acetyllysine; alternate). Position 309 is an N6-succinyllysine; alternate (Lys309). Residue Arg313 is modified to Asymmetric dimethylarginine. At Lys338 the chain carries N6-acetyllysine; alternate. Lys338 carries the N6-succinyllysine; alternate modification. Lys345 carries the N6-acetyllysine modification. N6-acetyllysine; alternate is present on Lys363. Lys363 bears the N6-succinyllysine; alternate mark. 2 positions are modified to N6-acetyllysine: Lys364 and Lys387. Residues Lys396 and Lys404 each carry the N6-acetyllysine; alternate modification. N6-succinyllysine; alternate is present on residues Lys396 and Lys404. Position 407 (Arg407) interacts with substrate.

This sequence belongs to the class-I pyridoxal-phosphate-dependent aminotransferase family. Homodimer. Pyridoxal 5'-phosphate is required as a cofactor.

The protein localises to the mitochondrion matrix. Its subcellular location is the cell membrane. It catalyses the reaction L-aspartate + 2-oxoglutarate = oxaloacetate + L-glutamate. It carries out the reaction L-kynurenine + 2-oxoglutarate = 4-(2-aminophenyl)-2,4-dioxobutanoate + L-glutamate. Catalyzes the irreversible transamination of the L-tryptophan metabolite L-kynurenine to form kynurenic acid (KA). As a member of the malate-aspartate shuttle, it has a key role in the intracellular NAD(H) redox balance. Is important for metabolite exchange between mitochondria and cytosol, and for amino acid metabolism. Facilitates cellular uptake of long-chain free fatty acids. This is Aspartate aminotransferase, mitochondrial (GOT2) from Bos taurus (Bovine).